A 298-amino-acid chain; its full sequence is Zinc finger protein-like 1 homolog (298 aa).

The B box-type; degenerate zinc finger occupies 1 to 43; that stretch reads MGLCKCPKRLVTNQFCFEHRVNVCEHCMVQSHPKCIVQSYLQW. The RING-type; atypical zinc-finger motif lies at 53 to 101; that stretch reads CTLCGTTLEQGDCVRLVCYHVFHWDCLNARQAALPANTAPRGHQCPACT. The segment at 199-230 is disordered; sequence AGDYASSRRPLLPRQSPIGGTDRDDNKYQRRT. At Ser214 the chain carries Phosphoserine. A helical transmembrane segment spans residues 255–275; that stretch reads WFLVTAGILAFVLFVYLMAWL.

This sequence belongs to the ZFPL1 family.

It localises to the membrane. This Drosophila erecta (Fruit fly) protein is Zinc finger protein-like 1 homolog.